We begin with the raw amino-acid sequence, 56 residues long: UPF0391 membrane protein Jann_3570 (56 aa).

The next 2 helical transmembrane spans lie at tryptophan 4–alanine 24 and glycine 29–alanine 48.

The protein belongs to the UPF0391 family.

The protein localises to the cell membrane. The chain is UPF0391 membrane protein Jann_3570 from Jannaschia sp. (strain CCS1).